We begin with the raw amino-acid sequence, 37 residues long: Cytochrome b6-f complex subunit 5 (37 aa).

Residues 5–25 (FLFGIVLGLIPITLAGLFVTA) form a helical membrane-spanning segment.

This sequence belongs to the PetG family. In terms of assembly, the 4 large subunits of the cytochrome b6-f complex are cytochrome b6, subunit IV (17 kDa polypeptide, PetD), cytochrome f and the Rieske protein, while the 4 small subunits are PetG, PetL, PetM and PetN. The complex functions as a dimer.

The protein localises to the plastid. It is found in the chloroplast thylakoid membrane. Functionally, component of the cytochrome b6-f complex, which mediates electron transfer between photosystem II (PSII) and photosystem I (PSI), cyclic electron flow around PSI, and state transitions. PetG is required for either the stability or assembly of the cytochrome b6-f complex. In Platanus occidentalis (Sycamore), this protein is Cytochrome b6-f complex subunit 5.